The sequence spans 106 residues: DNA-directed RNA polymerase subunit omega (106 aa).

The interval 76-106 (REPAREAAEPAGEAPEEQQRAAGEREDQGAA) is disordered. Basic and acidic residues predominate over residues 92–106 (EQQRAAGEREDQGAA).

It belongs to the RNA polymerase subunit omega family. As to quaternary structure, the RNAP catalytic core consists of 2 alpha, 1 beta, 1 beta' and 1 omega subunit. When a sigma factor is associated with the core the holoenzyme is formed, which can initiate transcription.

The enzyme catalyses RNA(n) + a ribonucleoside 5'-triphosphate = RNA(n+1) + diphosphate. Functionally, promotes RNA polymerase assembly. Latches the N- and C-terminal regions of the beta' subunit thereby facilitating its interaction with the beta and alpha subunits. The chain is DNA-directed RNA polymerase subunit omega from Rubrobacter xylanophilus (strain DSM 9941 / JCM 11954 / NBRC 16129 / PRD-1).